A 295-amino-acid polypeptide reads, in one-letter code: Elongation factor Ts (295 aa).

An involved in Mg(2+) ion dislocation from EF-Tu region spans residues 80–83; it reads TDFV.

It belongs to the EF-Ts family.

It is found in the cytoplasm. Functionally, associates with the EF-Tu.GDP complex and induces the exchange of GDP to GTP. It remains bound to the aminoacyl-tRNA.EF-Tu.GTP complex up to the GTP hydrolysis stage on the ribosome. The polypeptide is Elongation factor Ts (Lysinibacillus sphaericus (strain C3-41)).